We begin with the raw amino-acid sequence, 686 residues long: Methionine--tRNA ligase (686 aa).

The 'HIGH' region signature appears at 15-25; sequence PYANGSIHLGH. 4 residues coordinate Zn(2+): C146, C149, C159, and C162. Positions 332 to 336 match the 'KMSKS' region motif; sequence KMSKS. K335 is a binding site for ATP. The region spanning 585–686 is the tRNA-binding domain; that stretch reads AFEAVDMRIA…EGAQPGMRVM (102 aa).

It belongs to the class-I aminoacyl-tRNA synthetase family. MetG type 1 subfamily. As to quaternary structure, homodimer. The cofactor is Zn(2+).

Its subcellular location is the cytoplasm. The enzyme catalyses tRNA(Met) + L-methionine + ATP = L-methionyl-tRNA(Met) + AMP + diphosphate. Is required not only for elongation of protein synthesis but also for the initiation of all mRNA translation through initiator tRNA(fMet) aminoacylation. This is Methionine--tRNA ligase from Aliivibrio fischeri (strain MJ11) (Vibrio fischeri).